Here is a 311-residue protein sequence, read N- to C-terminus: Probable cobalamin biosynthesis protein CobD (311 aa).

4 consecutive transmembrane segments (helical) span residues 53 to 73 (FIFG…AIYG), 76 to 96 (ILIN…FLIS), 157 to 177 (DSII…AFIY), and 288 to 308 (FSID…YVIF).

The protein belongs to the CobD/CbiB family.

The protein resides in the cell membrane. The protein operates within cofactor biosynthesis; adenosylcobalamin biosynthesis. In terms of biological role, converts cobyric acid to cobinamide by the addition of aminopropanol on the F carboxylic group. The chain is Probable cobalamin biosynthesis protein CobD from Methanococcus aeolicus (strain ATCC BAA-1280 / DSM 17508 / OCM 812 / Nankai-3).